The chain runs to 76 residues: Large ribosomal subunit protein uL30 (76 aa).

The protein belongs to the universal ribosomal protein uL30 family. As to quaternary structure, part of the 50S ribosomal subunit.

The sequence is that of Large ribosomal subunit protein uL30 from Anaeromyxobacter dehalogenans (strain 2CP-1 / ATCC BAA-258).